Consider the following 913-residue polypeptide: Sterol uptake control protein 2 (913 aa).

Positions 50-80 form a DNA-binding region, zn(2)-C6 fungal-type; that stretch reads GCDNCKRRRVKCDEGKPACRKCTNMKLECQY. 2 disordered regions span residues 103-173 and 216-258; these read GSVE…SMGL and GNMG…LAGS. Thr122 carries the post-translational modification Phosphothreonine. Basic and acidic residues predominate over residues 150 to 164; it reads SESEEKSSAPIEDKN. The segment covering 222 to 241 has biased composition (low complexity); it reads QLQQQQQVQQQSQPQTQAQQ. Residues 303-346 are a coiled coil; that stretch reads QQHQQVQLQQYQQLRQEQHQQVQQQQQEQLQQYQQHFLQQQQQV. Disordered regions lie at residues 347–385 and 453–489; these read LLQQ…TLNS and MQEH…GSAS. Residues 374-385 are compositionally biased toward polar residues; the sequence is LQSQTSETTLNS. The stretch at 440-472 forms a coiled coil; it reads ATKASNAEEALANMQEHHERAAASVKENDGQLS. The segment covering 454–468 has biased composition (basic and acidic residues); the sequence is QEHHERAAASVKEND. Residues 469–487 show a composition bias toward polar residues; that stretch reads GQLSDTKSPAPSNNAQGGS. Ser519 bears the Phosphoserine mark. Residues 552-562 show a composition bias toward polar residues; sequence EPTISLQTSQT. Residues 552–571 form a disordered region; it reads EPTISLQTSQTENEDDASRQ.

The protein localises to the nucleus. Transcription factor that is involved in activation of anaerobic genes such as DAN/TIR cell wall mannoprotein genes and YML083c. Appears to bind to anaerobic response elements (AR1) with the consensus sequence 5'-TCGTTYAG-3' present in the promoter regions of DAN/TIR genes. Involved in sterol uptake and regulation of the sterol biosynthesis. Binds to sterol regulatory elements (SRE) with the consensus sequence 5'-TCGTATA-3' present in ERG2 and ERG3 promoters. May be involved in down-regulation of CWP2 during anaerobic adaptation. The polypeptide is Sterol uptake control protein 2 (UPC2) (Saccharomyces cerevisiae (strain ATCC 204508 / S288c) (Baker's yeast)).